The following is a 426-amino-acid chain: Serine--tRNA ligase (426 aa).

Residue 231 to 233 (TSE) participates in L-serine binding. 262-264 (RSE) lines the ATP pocket. Residue Glu285 participates in L-serine binding. ATP is bound at residue 349–352 (EISS). Position 385 (Ser385) interacts with L-serine.

The protein belongs to the class-II aminoacyl-tRNA synthetase family. Type-1 seryl-tRNA synthetase subfamily. In terms of assembly, homodimer. The tRNA molecule binds across the dimer.

The protein resides in the cytoplasm. The catalysed reaction is tRNA(Ser) + L-serine + ATP = L-seryl-tRNA(Ser) + AMP + diphosphate + H(+). It carries out the reaction tRNA(Sec) + L-serine + ATP = L-seryl-tRNA(Sec) + AMP + diphosphate + H(+). The protein operates within aminoacyl-tRNA biosynthesis; selenocysteinyl-tRNA(Sec) biosynthesis; L-seryl-tRNA(Sec) from L-serine and tRNA(Sec): step 1/1. Catalyzes the attachment of serine to tRNA(Ser). Is also able to aminoacylate tRNA(Sec) with serine, to form the misacylated tRNA L-seryl-tRNA(Sec), which will be further converted into selenocysteinyl-tRNA(Sec). The protein is Serine--tRNA ligase of Legionella pneumophila (strain Lens).